A 287-amino-acid polypeptide reads, in one-letter code: Orotidine 5'-phosphate decarboxylase (287 aa).

Lys97 (proton donor) is an active-site residue.

This sequence belongs to the OMP decarboxylase family. Type 2 subfamily.

The catalysed reaction is orotidine 5'-phosphate + H(+) = UMP + CO2. It functions in the pathway pyrimidine metabolism; UMP biosynthesis via de novo pathway; UMP from orotate: step 2/2. This chain is Orotidine 5'-phosphate decarboxylase, found in Clostridium perfringens (strain SM101 / Type A).